A 239-amino-acid chain; its full sequence is Lipoprotein-releasing system ATP-binding protein LolD (239 aa).

Residues 9–239 (LQVQHVSKHY…AATSPTGLAE (231 aa)) enclose the ABC transporter domain. Residue 45-52 (GSSGSGKS) participates in ATP binding.

It belongs to the ABC transporter superfamily. Lipoprotein translocase (TC 3.A.1.125) family. The complex is composed of two ATP-binding proteins (LolD) and two transmembrane proteins (LolC and LolE).

It localises to the cell inner membrane. In terms of biological role, part of the ABC transporter complex LolCDE involved in the translocation of mature outer membrane-directed lipoproteins, from the inner membrane to the periplasmic chaperone, LolA. Responsible for the formation of the LolA-lipoprotein complex in an ATP-dependent manner. The chain is Lipoprotein-releasing system ATP-binding protein LolD from Shewanella frigidimarina (strain NCIMB 400).